Reading from the N-terminus, the 458-residue chain is Retinoic acid receptor RXR-beta (458 aa).

Residues 1-17 (GEAGRDGMGDTGRDSRS) show a composition bias toward basic and acidic residues. The tract at residues 1 to 105 (GEAGRDGMGD…GGSGPPEDVK (105 aa)) is disordered. Positions 1 to 129 (GEAGRDGMGD…PGGPGAGKRL (129 aa)) are modulating. A compositionally biased stretch (low complexity) spans 18 to 31 (PDSSSPNPLSQGIP). Pro residues predominate over residues 32 to 56 (PSSPPGPPHTPSAPPPPMPPPPLGS). A compositionally biased stretch (low complexity) spans 57 to 68 (PFPVISSSMGSP). The segment covering 69–78 (GLPPPAPPGF) has biased composition (pro residues). NR C4-type zinc fingers lie at residues 130 to 150 (CAICGDRSSGKHYGVYSCEGC) and 166 to 190 (CRDNKDCTVDKRQRNRCQYCRYQKC). Positions 130-195 (CAICGDRSSG…RYQKCLATGM (66 aa)) form a DNA-binding region, nuclear receptor. The segment at 196–220 (KREAVQEERQRGKDKDGDGDGAGGA) is hinge. The segment covering 201 to 213 (QEERQRGKDKDGD) has biased composition (basic and acidic residues). Disordered regions lie at residues 201–223 (QEERQRGKDKDGDGDGAGGAPEE) and 238–261 (QKSDQGVEGPGATGGGGSSPNDPV). In terms of domain architecture, NR LBD spans 221–454 (PEEMPVDRIL…TFLMEMLEAP (234 aa)). Residues 245–255 (EGPGATGGGGS) show a composition bias toward gly residues.

The protein belongs to the nuclear hormone receptor family. NR2 subfamily. As to quaternary structure, homodimer (in vitro). Heterodimer with other retinoic acid receptor family members. Binds DNA preferentially as a RAR/RXR heterodimer. Interacts with NR1H3. Interacts with AKAP13. Expressed in the adrenal gland with main expression in the zona fasciculata (at protein level).

The protein localises to the nucleus. It localises to the cytoplasm. Functionally, receptor for retinoic acid. Retinoic acid receptors bind as heterodimers to their target response elements in response to their ligands, all-trans or 9-cis retinoic acid, and regulate gene expression in various biological processes. The RAR/RXR heterodimers bind to the retinoic acid response elements (RARE). In Rattus norvegicus (Rat), this protein is Retinoic acid receptor RXR-beta (Rxrb).